The sequence spans 402 residues: Imidazolonepropionase (402 aa).

His66 and His68 together coordinate Fe(3+). His66 and His68 together coordinate Zn(2+). Positions 75, 138, and 171 each coordinate 4-imidazolone-5-propanoate. N-formimidoyl-L-glutamate is bound at residue Tyr138. Position 236 (His236) interacts with Fe(3+). Residue His236 coordinates Zn(2+). Gln239 lines the 4-imidazolone-5-propanoate pocket. Asp311 contacts Fe(3+). Asp311 serves as a coordination point for Zn(2+). The N-formimidoyl-L-glutamate site is built by Asn313 and Gly315. Residue Thr316 coordinates 4-imidazolone-5-propanoate.

It belongs to the metallo-dependent hydrolases superfamily. HutI family. Requires Zn(2+) as cofactor. Fe(3+) is required as a cofactor.

It is found in the cytoplasm. The enzyme catalyses 4-imidazolone-5-propanoate + H2O = N-formimidoyl-L-glutamate. The protein operates within amino-acid degradation; L-histidine degradation into L-glutamate; N-formimidoyl-L-glutamate from L-histidine: step 3/3. Functionally, catalyzes the hydrolytic cleavage of the carbon-nitrogen bond in imidazolone-5-propanoate to yield N-formimidoyl-L-glutamate. It is the third step in the universal histidine degradation pathway. This Pseudomonas aeruginosa (strain LESB58) protein is Imidazolonepropionase.